The chain runs to 278 residues: ATP synthase subunit delta (278 aa).

The protein belongs to the ATPase delta chain family. As to quaternary structure, F-type ATPases have 2 components, F(1) - the catalytic core - and F(0) - the membrane proton channel. F(1) has five subunits: alpha(3), beta(3), gamma(1), delta(1), epsilon(1). F(0) has three main subunits: a(1), b(2) and c(10-14). The alpha and beta chains form an alternating ring which encloses part of the gamma chain. F(1) is attached to F(0) by a central stalk formed by the gamma and epsilon chains, while a peripheral stalk is formed by the delta and b chains.

It localises to the cell membrane. Functionally, f(1)F(0) ATP synthase produces ATP from ADP in the presence of a proton or sodium gradient. F-type ATPases consist of two structural domains, F(1) containing the extramembraneous catalytic core and F(0) containing the membrane proton channel, linked together by a central stalk and a peripheral stalk. During catalysis, ATP synthesis in the catalytic domain of F(1) is coupled via a rotary mechanism of the central stalk subunits to proton translocation. This protein is part of the stalk that links CF(0) to CF(1). It either transmits conformational changes from CF(0) to CF(1) or is implicated in proton conduction. This chain is ATP synthase subunit delta, found in Bifidobacterium longum subsp. infantis (strain ATCC 15697 / DSM 20088 / JCM 1222 / NCTC 11817 / S12).